Reading from the N-terminus, the 439-residue chain is Lipoyl synthase, mitochondrial (439 aa).

A mitochondrion-targeting transit peptide spans 1–37; the sequence is MVASARGLRTLHSAHSSISALPASTVPRLQLAVSRCY. The [4Fe-4S] cluster site is built by Cys150, Cys155, Cys161, Cys181, Cys185, Cys188, and Ser396. Positions 164–385 constitute a Radical SAM core domain; that stretch reads GSSKSAATAT…KERALEMGFL (222 aa).

This sequence belongs to the radical SAM superfamily. Lipoyl synthase family. It depends on [4Fe-4S] cluster as a cofactor.

The protein localises to the mitochondrion. The catalysed reaction is [[Fe-S] cluster scaffold protein carrying a second [4Fe-4S](2+) cluster] + N(6)-octanoyl-L-lysyl-[protein] + 2 oxidized [2Fe-2S]-[ferredoxin] + 2 S-adenosyl-L-methionine + 4 H(+) = [[Fe-S] cluster scaffold protein] + N(6)-[(R)-dihydrolipoyl]-L-lysyl-[protein] + 4 Fe(3+) + 2 hydrogen sulfide + 2 5'-deoxyadenosine + 2 L-methionine + 2 reduced [2Fe-2S]-[ferredoxin]. It participates in protein modification; protein lipoylation via endogenous pathway; protein N(6)-(lipoyl)lysine from octanoyl-[acyl-carrier-protein]: step 2/2. Catalyzes the radical-mediated insertion of two sulfur atoms into the C-6 and C-8 positions of the octanoyl moiety bound to the lipoyl domains of lipoate-dependent enzymes, thereby converting the octanoylated domains into lipoylated derivatives. This Paracoccidioides lutzii (strain ATCC MYA-826 / Pb01) (Paracoccidioides brasiliensis) protein is Lipoyl synthase, mitochondrial.